Reading from the N-terminus, the 235-residue chain is 6-carboxyhexanoate--CoA ligase (235 aa).

Belongs to the BioW family. In terms of assembly, homodimer. Requires Mg(2+) as cofactor.

The catalysed reaction is heptanedioate + ATP + CoA = 6-carboxyhexanoyl-CoA + AMP + diphosphate. It functions in the pathway metabolic intermediate metabolism; pimeloyl-CoA biosynthesis; pimeloyl-CoA from pimelate: step 1/1. In terms of biological role, catalyzes the transformation of pimelate into pimeloyl-CoA with concomitant hydrolysis of ATP to AMP. The sequence is that of 6-carboxyhexanoate--CoA ligase from Desulfovibrio desulfuricans (strain ATCC 27774 / DSM 6949 / MB).